A 241-amino-acid chain; its full sequence is tRNA pseudouridine synthase B (241 aa).

Aspartate 45 (nucleophile) is an active-site residue.

The protein belongs to the pseudouridine synthase TruB family. Type 1 subfamily.

It catalyses the reaction uridine(55) in tRNA = pseudouridine(55) in tRNA. Its function is as follows. Responsible for synthesis of pseudouridine from uracil-55 in the psi GC loop of transfer RNAs. In Chlamydia muridarum (strain MoPn / Nigg), this protein is tRNA pseudouridine synthase B.